Reading from the N-terminus, the 567-residue chain is Thiol:disulfide interchange protein DsbD (567 aa).

The N-terminal stretch at 1–19 (MAQRIFTLILLLCSTSAFA) is a signal peptide. 2 cysteine pairs are disulfide-bonded: Cys122–Cys128 and Cys185–Cys307. 7 helical membrane-spanning segments follow: residues 170–192 (ALWA…MYPL), 212–234 (LAFI…VAAA), 246–268 (YVLI…LFTL), 297–319 (GAIA…LLYI), 326–348 (WLGG…LVTV), 358–380 (GPWM…VFLL), and 387–409 (AWGL…ITSL). The region spanning 435-567 (QDWAFGSPSA…FSAHLHDRQP (133 aa)) is the Thioredoxin domain. A disulfide bridge links Cys482 with Cys485.

Belongs to the thioredoxin family. DsbD subfamily.

Its subcellular location is the cell inner membrane. It carries out the reaction [protein]-dithiol + NAD(+) = [protein]-disulfide + NADH + H(+). It catalyses the reaction [protein]-dithiol + NADP(+) = [protein]-disulfide + NADPH + H(+). Required to facilitate the formation of correct disulfide bonds in some periplasmic proteins and for the assembly of the periplasmic c-type cytochromes. Acts by transferring electrons from cytoplasmic thioredoxin to the periplasm. This transfer involves a cascade of disulfide bond formation and reduction steps. The polypeptide is Thiol:disulfide interchange protein DsbD (Salmonella typhimurium (strain LT2 / SGSC1412 / ATCC 700720)).